Here is a 228-residue protein sequence, read N- to C-terminus: Elongation factor 1-beta (228 aa).

The interval 74–116 (ASKAFTAYGPEGSEASANPKDKPAEEEEEEDLFASDSEDEDPA) is disordered. Residues 84 to 93 (EGSEASANPK) are igE-binding. A compositionally biased stretch (acidic residues) spans 97–115 (AEEEEEEDLFASDSEDEDP).

Belongs to the EF-1-beta/EF-1-delta family. In terms of assembly, EF-1 is composed of 4 subunits: alpha, beta, delta, and gamma.

Its function is as follows. EF-1-beta and EF-1-delta stimulate the exchange of GDP bound to EF-1-alpha to GTP. The protein is Elongation factor 1-beta of Penicillium citrinum.